A 31-amino-acid polypeptide reads, in one-letter code: Photosystem II reaction center protein T (31 aa).

Residues 3 to 23 (ALVYTFLLISTLGIIFFGIFF) traverse the membrane as a helical segment.

Belongs to the PsbT family. PSII is composed of 1 copy each of membrane proteins PsbA, PsbB, PsbC, PsbD, PsbE, PsbF, PsbH, PsbI, PsbJ, PsbK, PsbL, PsbM, PsbT, PsbY, PsbZ, Psb30/Ycf12, at least 3 peripheral proteins of the oxygen-evolving complex and a large number of cofactors. It forms dimeric complexes.

The protein resides in the plastid. The protein localises to the chloroplast thylakoid membrane. Functionally, found at the monomer-monomer interface of the photosystem II (PS II) dimer, plays a role in assembly and dimerization of PSII. PSII is a light-driven water plastoquinone oxidoreductase, using light energy to abstract electrons from H(2)O, generating a proton gradient subsequently used for ATP formation. This chain is Photosystem II reaction center protein T, found in Nephroselmis olivacea (Green alga).